The following is a 117-amino-acid chain: Large ribosomal subunit protein bL20 (117 aa).

The protein belongs to the bacterial ribosomal protein bL20 family.

Binds directly to 23S ribosomal RNA and is necessary for the in vitro assembly process of the 50S ribosomal subunit. It is not involved in the protein synthesizing functions of that subunit. The chain is Large ribosomal subunit protein bL20 from Marinobacter nauticus (strain ATCC 700491 / DSM 11845 / VT8) (Marinobacter aquaeolei).